The primary structure comprises 360 residues: S-adenosylmethionine:tRNA ribosyltransferase-isomerase (360 aa).

It belongs to the QueA family. In terms of assembly, monomer.

It localises to the cytoplasm. It carries out the reaction 7-aminomethyl-7-carbaguanosine(34) in tRNA + S-adenosyl-L-methionine = epoxyqueuosine(34) in tRNA + adenine + L-methionine + 2 H(+). It participates in tRNA modification; tRNA-queuosine biosynthesis. Transfers and isomerizes the ribose moiety from AdoMet to the 7-aminomethyl group of 7-deazaguanine (preQ1-tRNA) to give epoxyqueuosine (oQ-tRNA). This chain is S-adenosylmethionine:tRNA ribosyltransferase-isomerase, found in Rhodopseudomonas palustris (strain BisB5).